The following is a 304-amino-acid chain: Oxygen-dependent coproporphyrinogen-III oxidase (304 aa).

S95 is a substrate binding site. A divalent metal cation is bound by residues H99 and H109. The Proton donor role is filled by H109. 111 to 113 (NVR) contacts substrate. The a divalent metal cation site is built by H148 and H178. Residues 243 to 278 (YVEFNLVYDRGTLFGLQSGGRTESILMSLPPLVRWR) form an important for dimerization region. Residue 261 to 263 (GGR) coordinates substrate.

It belongs to the aerobic coproporphyrinogen-III oxidase family. In terms of assembly, homodimer. Requires a divalent metal cation as cofactor.

The protein localises to the cytoplasm. The catalysed reaction is coproporphyrinogen III + O2 + 2 H(+) = protoporphyrinogen IX + 2 CO2 + 2 H2O. It functions in the pathway porphyrin-containing compound metabolism; protoporphyrin-IX biosynthesis; protoporphyrinogen-IX from coproporphyrinogen-III (O2 route): step 1/1. Functionally, involved in the heme biosynthesis. Catalyzes the aerobic oxidative decarboxylation of propionate groups of rings A and B of coproporphyrinogen-III to yield the vinyl groups in protoporphyrinogen-IX. This chain is Oxygen-dependent coproporphyrinogen-III oxidase, found in Thioalkalivibrio sulfidiphilus (strain HL-EbGR7).